The chain runs to 170 residues: Adenine phosphoribosyltransferase (170 aa).

The protein belongs to the purine/pyrimidine phosphoribosyltransferase family. As to quaternary structure, homodimer.

It is found in the cytoplasm. It carries out the reaction AMP + diphosphate = 5-phospho-alpha-D-ribose 1-diphosphate + adenine. It participates in purine metabolism; AMP biosynthesis via salvage pathway; AMP from adenine: step 1/1. Its function is as follows. Catalyzes a salvage reaction resulting in the formation of AMP, that is energically less costly than de novo synthesis. This is Adenine phosphoribosyltransferase from Pseudothermotoga lettingae (strain ATCC BAA-301 / DSM 14385 / NBRC 107922 / TMO) (Thermotoga lettingae).